The following is a 198-amino-acid chain: Alkyl hydroperoxide reductase C (198 aa).

In terms of domain architecture, Thioredoxin spans 2–163; sequence TLVTQKAPNF…MIRMIDALNF (162 aa). Cysteine 50 (cysteine sulfenic acid (-SOH) intermediate) is an active-site residue.

It belongs to the peroxiredoxin family. AhpC/Prx1 subfamily. In terms of assembly, homodimer; disulfide-linked, upon oxidation. 5 homodimers assemble to form a ring-like decamer.

It localises to the cytoplasm. The enzyme catalyses a hydroperoxide + NADH + H(+) = an alcohol + NAD(+) + H2O. Functionally, thiol-specific peroxidase that catalyzes the reduction of hydrogen peroxide and organic hydroperoxides to water and alcohols, respectively. Plays a role in cell protection against oxidative stress by detoxifying peroxides. The chain is Alkyl hydroperoxide reductase C from Buchnera aphidicola subsp. Schizaphis graminum (strain Sg).